The primary structure comprises 53 residues: Mitochondrial sheath formation-associated protein (53 aa).

Mitochondrial intermembrane-side segments run 1–6 (MIVLGW) and 1–7 (MIVLGWM). The next 2 helical transmembrane spans lie at 7-23 (MLFV…PEAM) and 8-24 (LFVG…EAMP). Cytoplasmic loops occupy residues 24–53 (PPTL…ELLL) and 25–40 (PTLK…ENKA).

In terms of assembly, interacts with VDAC3. In terms of tissue distribution, testis specific. Detected only in germ cells at the step of spermiogenesis (at protein level). Expressed during the middle steps of spermatid development. Testis specific. Detected only in germ cells at the step of spermiogenesis (at protein level). Expressed in the late steps of spermatid development.

The protein resides in the mitochondrion outer membrane. In terms of biological role, regulates sperm development. May be involved in mitochondrial sheath formation. This Mus musculus (Mouse) protein is Mitochondrial sheath formation-associated protein.